Consider the following 257-residue polypeptide: Distal membrane-arm assembly complex protein 2 (257 aa).

Phosphoserine is present on S253.

It belongs to the ATP synthase subunit s family. Interacts with incompletely assembled mitochondrial NADH:ubiquinone oxidoreductase complex (complex I).

Its subcellular location is the mitochondrion. Required for the assembly of the mitochondrial NADH:ubiquinone oxidoreductase complex (complex I). Involved in the assembly of the distal region of complex I. The chain is Distal membrane-arm assembly complex protein 2 from Homo sapiens (Human).